Consider the following 306-residue polypeptide: Pantothenate kinase (306 aa).

91-98 (GSVAVGKS) contributes to the ATP binding site.

Belongs to the prokaryotic pantothenate kinase family.

Its subcellular location is the cytoplasm. It carries out the reaction (R)-pantothenate + ATP = (R)-4'-phosphopantothenate + ADP + H(+). Its pathway is cofactor biosynthesis; coenzyme A biosynthesis; CoA from (R)-pantothenate: step 1/5. The protein is Pantothenate kinase of Streptococcus mutans serotype c (strain ATCC 700610 / UA159).